The following is a 148-amino-acid chain: Transcriptional regulator MraZ (148 aa).

2 consecutive SpoVT-AbrB domains span residues 5–51 (AAAL…PSPA) and 80–123 (ARTE…SEAG).

It belongs to the MraZ family. Forms oligomers.

Its subcellular location is the cytoplasm. The protein resides in the nucleoid. The polypeptide is Transcriptional regulator MraZ (Dechloromonas aromatica (strain RCB)).